The following is a 347-amino-acid chain: Biotin synthase (347 aa).

The 219-residue stretch at 40–258 (AQVQVSTLLS…IAVARIVMPR (219 aa)) folds into the Radical SAM core domain. [4Fe-4S] cluster-binding residues include Cys-55, Cys-59, and Cys-62. 4 residues coordinate [2Fe-2S] cluster: Cys-99, Cys-130, Cys-190, and Arg-262.

It belongs to the radical SAM superfamily. Biotin synthase family. As to quaternary structure, homodimer. The cofactor is [4Fe-4S] cluster. [2Fe-2S] cluster serves as cofactor.

It catalyses the reaction (4R,5S)-dethiobiotin + (sulfur carrier)-SH + 2 reduced [2Fe-2S]-[ferredoxin] + 2 S-adenosyl-L-methionine = (sulfur carrier)-H + biotin + 2 5'-deoxyadenosine + 2 L-methionine + 2 oxidized [2Fe-2S]-[ferredoxin]. Its pathway is cofactor biosynthesis; biotin biosynthesis; biotin from 7,8-diaminononanoate: step 2/2. Catalyzes the conversion of dethiobiotin (DTB) to biotin by the insertion of a sulfur atom into dethiobiotin via a radical-based mechanism. The polypeptide is Biotin synthase (Stenotrophomonas maltophilia (strain R551-3)).